The following is a 315-amino-acid chain: ADP/ATP translocase 4 (315 aa).

Residues 1–19 are Mitochondrial intermembrane-facing; it reads MHREPAKKKAEKRLFDASS. One copy of the Solcar 1 repeat lies at 18–110; that stretch reads SSFGKDLLAG…FAFKDKYKQL (93 aa). The helical transmembrane segment at 20–49 threads the bilayer; sequence FGKDLLAGGVAAAVSKTAVAPIERVKLLLQ. The Mitochondrial matrix portion of the chain corresponds to 50 to 86; that stretch reads VQASSKQISPEARYKGMVDCLVRIPREQGFFSFWRGN. The chain crosses the membrane as a helical span at residues 87 to 111; sequence LANVIRYFPTQALNFAFKDKYKQLF. 2 residues coordinate ADP: Arg-92 and Lys-104. Topologically, residues 112–121 are mitochondrial intermembrane; sequence MSGVNKEKQF. The helical transmembrane segment at 122–142 threads the bilayer; the sequence is WRWFLANLASGGAAGATSLCV. 2 Solcar repeats span residues 123–213 and 220–307; these read RWFL…VKGL and TPFL…IKEF. Topologically, residues 143 to 190 are mitochondrial matrix; sequence VYPLDFARTRLGVDIGKGPEERQFKGLGDCIMKIAKSDGIAGLYQGFG. Residues 191–211 form a helical membrane-spanning segment; sequence VSVQGIIVYRASYFGAYDTVK. Over 212-222 the chain is Mitochondrial intermembrane; the sequence is GLLPKPKKTPF. Residues 223–243 traverse the membrane as a helical segment; sequence LVSFFIAQVVTTCSGILSYPF. The Mitochondrial matrix segment spans residues 244 to 283; it reads DTVRRRMMMQSGEAKRQYKGTLDCFVKIYQHEGISSFFRG. Arg-247 provides a ligand contact to ADP. An important for transport activity region spans residues 247–252; the sequence is RRRMMM. A Nucleotide carrier signature motif motif is present at residues 247 to 252; it reads RRRMMM. The helical transmembrane segment at 284–301 threads the bilayer; the sequence is AFSNVLRGTGGALVLVLY. Over 302 to 315 the chain is Mitochondrial intermembrane; the sequence is DKIKEFFHIDIGGR.

This sequence belongs to the mitochondrial carrier (TC 2.A.29) family. Monomer. In terms of tissue distribution, expressed in brain, liver, sperm and testis. In testis, expressed at higher level in spermatocytes, while it is expressed at lower level in spermatogonial cells. Expressed in erythrocytes (at protein level).

The protein localises to the mitochondrion inner membrane. It is found in the membrane. The protein resides in the cell projection. It localises to the cilium. Its subcellular location is the flagellum membrane. The enzyme catalyses ADP(in) + ATP(out) = ADP(out) + ATP(in). The catalysed reaction is dATP(out) + ADP(in) = dATP(in) + ADP(out). It carries out the reaction dADP(in) + ADP(out) = dADP(out) + ADP(in). It catalyses the reaction H(+)(in) = H(+)(out). The matrix-open state (m-state) is inhibited by the membrane-permeable bongkrekic acid (BKA). The cytoplasmic-open state (c-state) is inhibited by the membrane-impermeable toxic inhibitor carboxyatractyloside (CATR). Proton transporter activity is inhibited by ADP:ATP antiporter activity. Its function is as follows. ADP:ATP antiporter that mediates import of ADP into the mitochondrial matrix for ATP synthesis, and export of ATP out to fuel the cell. Cycles between the cytoplasmic-open state (c-state) and the matrix-open state (m-state): operates by the alternating access mechanism with a single substrate-binding site intermittently exposed to either the cytosolic (c-state) or matrix (m-state) side of the inner mitochondrial membrane. Specifically required during spermatogenesis, probably to mediate ADP:ATP exchange in spermatocytes. Large ATP supplies from mitochondria may be critical for normal progression of spermatogenesis during early stages of meiotic prophase I, including DNA double-strand break repair and chromosomal synapsis. In addition to its ADP:ATP antiporter activity, also involved in mitochondrial uncoupling and mitochondrial permeability transition pore (mPTP) activity. Plays a role in mitochondrial uncoupling by acting as a proton transporter: proton transport uncouples the proton flows via the electron transport chain and ATP synthase to reduce the efficiency of ATP production and cause mitochondrial thermogenesis. Proton transporter activity is inhibited by ADP:ATP antiporter activity, suggesting that SLC25A31/ANT4 acts as a master regulator of mitochondrial energy output by maintaining a delicate balance between ATP production (ADP:ATP antiporter activity) and thermogenesis (proton transporter activity). Proton transporter activity requires free fatty acids as cofactor, but does not transport it. Among nucleotides, may also exchange ADP for dATP and dADP. Also plays a key role in mPTP opening, a non-specific pore that enables free passage of the mitochondrial membranes to solutes of up to 1.5 kDa, and which contributes to cell death. It is however unclear if SLC25A31/ANT4 constitutes a pore-forming component of mPTP or regulates it. This Homo sapiens (Human) protein is ADP/ATP translocase 4.